The chain runs to 414 residues: Probable uracil permease (414 aa).

Topologically, residues 1 to 14 (MTNQIPPSLAENQS) are cytoplasmic. Residues 15-38 (KLKQSFVGLQMLFVAFGALVLVPL) form a helical membrane-spanning segment. The Periplasmic segment spans residues 39-42 (ITGL). A helical transmembrane segment spans residues 43 to 62 (DSNTALLTAGVGTLLFQFCT). Residues 63–65 (GKQ) are Cytoplasmic-facing. A discontinuously helical membrane pass occupies residues 66-82 (VPIFLASSFAFIAPIQY). Phe74 serves as a coordination point for uracil. Residues 83–91 (GVQTWGIAT) lie on the Periplasmic side of the membrane. Residues 92–112 (TMGGLAFTGLVYFALSTLVKL) traverse the membrane as a helical segment. The Cytoplasmic portion of the chain corresponds to 113-124 (RGAEALQRFFPP). A helical membrane pass occupies residues 125 to 146 (VVVGPVIIIIGMGLAPIAVDMS). The Periplasmic segment spans residues 147–155 (LGKNSAYAY). A helical membrane pass occupies residues 156–171 (NDAVLVSMVTLLTTLS). Over 172 to 178 (VAVFAKG) the chain is Cytoplasmic. Residues 179–199 (LMKLIPIMFGITAGYILCLFL) form a helical membrane-spanning segment. The Periplasmic portion of the chain corresponds to 200-224 (GLINFQPVIDAPWFSLPKLTTPEFN). The helical transmembrane segment at 225–248 (LEAILYMLPIAIAPAVEHVGGIMA) threads the bilayer. Position 241 (Glu241) interacts with uracil. At 249–261 (ISSVTGKDFLKKP) the chain is on the cytoplasmic side. A helical transmembrane segment spans residues 262–281 (GLHRTLLGDGIATAAASLVG). Residues 282–298 (GPPNTTYAEVTGAVMLT) traverse the membrane as a discontinuously helical segment. Position 290 (Glu290) interacts with uracil. At 299 to 301 (RNF) the chain is on the cytoplasmic side. Residues 302 to 319 (NPNIMTWAAVWAIAISFC) traverse the membrane as a helical segment. Over 320–332 (GKVGAFLSTIPTI) the chain is Periplasmic. Residues 333-354 (VMGGIMMLVFGSIAVVGMSTLI) form a helical membrane-spanning segment. Over 355-365 (RGKVDVTEARN) the chain is Cytoplasmic. An intramembrane region (discontinuously helical) is located at residues 366 to 401 (LCIISVVMTFGIGNMFVDVGNVSLKGISLCAIVAII). Residues 402–414 (LNLVLPKAKNEVE) lie on the Cytoplasmic side of the membrane.

This sequence belongs to the nucleobase:cation symporter-2 (NCS2) (TC 2.A.40) family.

The protein resides in the cell inner membrane. It catalyses the reaction uracil(in) + H(+)(in) = uracil(out) + H(+)(out). Its function is as follows. Transport of uracil in the cell. The polypeptide is Probable uracil permease (uraA) (Haemophilus influenzae (strain ATCC 51907 / DSM 11121 / KW20 / Rd)).